The chain runs to 842 residues: MSLSAAANKISDNDFQNIGPAPRPPSSNSQGRTCYNQTQPITKLMSQLDLTSASHLGTSTSKKKSGWVSYKDDGILSFIWQKRYLMLHDSYVALYKNDKQNDDAILKIPLTSIISVSRTQLKQYCFELVRCSDRNSVSSGSSSSLNVSSDSNSKKSIYIATKTESDLHSWLDAIFAKCPLLSGVSSPTNFTHKVHVGFDPETGSFVGMPTNWEKLLKHSRITGEDWNNNSAAVIQVLQFYQEYNGAGNPTNTLDKPQSGETSSSQKSLPNSYNDNKLRNNSVNSKSSSGVSSSMVSQRKTSQPPNTKSPVSLGSGSLPPINTKLPTSQSNIPRHLQNVPNQQYPKMRNGHSPTNGQFPRGPMHPNNSQRSLQQQQQQQQQQKQQHQQYPYHHQGPSPSPSPSPSPLNPYRPHHNMINPYSKQPQSPLSSQSTQNQAIPRYAQNSSPTAAHFQPQRTAPKPPISAPRAPYPSNQNATSNTHVQPVAPKNDQSTPQTMRQAPKRPDADVAQPGGVAKPKKPARPTMSTAEIMSKLKKVTVNADPSQCFKVIEKAGQGASGSVYLAERTHIPTESNMIELINNDIDEPHVGDKVAIKQMVLSKQPRKELIVNEILVMKDSRHKNIVNFLEAYLRTDDDLWVVMEFMEGGSLTDIIENSPTNDNSHSPLTEPQIAYIVRETCQGLKFLHDKHIIHRDIKSDNVLLDTRARVKITDFGFCARLTDKRSKRATMVGTPYWMAPEVVKQREYDEKIDVWSLGIMTIEMLEGEPPYLNEDPLKALYLIATNGTPKLKHPESLSLEIKRFLSVCLCVDVRYRASTEELLHHGFFNMACDPKDLTSLLEWKE.

Residues D12 to C34 form a disordered region. S29 and S46 each carry phosphoserine. The region spanning S61–P179 is the PH domain. The region spanning V184–G197 is the CRIB domain. Positions G247–D274 are enriched in polar residues. A disordered region spans residues G247 to M524. The segment covering N279–S296 has biased composition (low complexity). The segment covering Q297 to K307 has biased composition (polar residues). Residues S308–P319 are compositionally biased toward low complexity. Polar residues predominate over residues K323–Y343. A phosphoserine mark is found at S351 and S367. Low complexity predominate over residues Q372–Q387. Residues S396 to P408 show a composition bias toward pro residues. Residues P418 to Q435 show a composition bias toward low complexity. A Phosphoserine modification is found at S425. 2 stretches are compositionally biased toward polar residues: residues P470 to V481 and N488 to R497. Residues F546–F825 form the Protein kinase domain. Residues A552–V560 and K594 contribute to the ATP site. The Proton acceptor role is filled by D693.

It belongs to the protein kinase superfamily. STE Ser/Thr protein kinase family. STE20 subfamily. In terms of assembly, interacts with CDC42.

The catalysed reaction is L-seryl-[protein] + ATP = O-phospho-L-seryl-[protein] + ADP + H(+). The enzyme catalyses L-threonyl-[protein] + ATP = O-phospho-L-threonyl-[protein] + ADP + H(+). In terms of biological role, involved in budding and cytokinesis. This is Serine/threonine-protein kinase CLA4 (CLA4) from Saccharomyces cerevisiae (strain ATCC 204508 / S288c) (Baker's yeast).